A 407-amino-acid chain; its full sequence is snRNA-activating protein complex subunit 3 (407 aa).

The span at 1–12 (MAEDPQGGGAGG) shows a compositional bias: gly residues. The interval 1–26 (MAEDPQGGGAGGPQHPVPSGSHSSFP) is disordered.

This sequence belongs to the SNAPC3/SRD2 family. Part of the SNAPc complex composed of 5 subunits: SNAPC1, SNAPC2, SNAPC3, SNAPC4 and SNAPC5. SNAPC3 interacts with SNAPC1.

It localises to the nucleus. Its function is as follows. Part of the SNAPc complex required for the transcription of both RNA polymerase II and III small-nuclear RNA genes. Binds to the proximal sequence element (PSE), a non-TATA-box basal promoter element common to these 2 types of genes. Recruits TBP and BRF2 to the U6 snRNA TATA box. In Rattus norvegicus (Rat), this protein is snRNA-activating protein complex subunit 3 (Snapc3).